The chain runs to 359 residues: sn-1 linoleoyl-lipid 6-desaturase (359 aa).

The next 2 helical transmembrane spans lie at leucine 45–phenylalanine 65 and leucine 69–aspartate 89. A Histidine box-1 motif is present at residues histidine 88–histidine 92. The Histidine box-2 motif lies at histidine 123–histidine 128. Transmembrane regions (helical) follow at residues isoleucine 165–leucine 185, leucine 206–phenylalanine 226, and valine 231–methionine 251. Residues histidine 306–proline 310 carry the Histidine box-3 motif.

This sequence belongs to the fatty acid desaturase type 2 family. Requires Fe(2+) as cofactor.

Its subcellular location is the membrane. The enzyme catalyses a 1-[(9Z,12Z)-octadecdienoyl]-2-acyl-glycerolipid + 2 reduced [2Fe-2S]-[ferredoxin] + O2 + 2 H(+) = a 1-[(6Z,9Z,12Z)-octadectrienoyl]-2-acyl-glycerolipid + 2 oxidized [2Fe-2S]-[ferredoxin] + 2 H2O. It participates in lipid metabolism; polyunsaturated fatty acid biosynthesis. Desaturase involved in fatty acid biosynthesis. Introduces a double bond at carbon 6 of linoleoyl group (18:2) attached to the sn-1 position of the glycerol moiety of membrane glycerolipids, leading to the formation of gamma-linolenic acid (GLA). In Synechocystis sp. (strain ATCC 27184 / PCC 6803 / Kazusa), this protein is sn-1 linoleoyl-lipid 6-desaturase.